Consider the following 37-residue polypeptide: Large ribosomal subunit protein bL36 (37 aa).

This sequence belongs to the bacterial ribosomal protein bL36 family.

The protein is Large ribosomal subunit protein bL36 of Ureaplasma parvum serovar 3 (strain ATCC 27815 / 27 / NCTC 11736).